Consider the following 404-residue polypeptide: MSHSRYYFTSESVSEGHPDKVADQISDAVLDEFIKQDPNSRVACETFVTTGQVIVGGEVTSKGIVDVQTIARKTITEIGYTKGEYMFDANSCGILSALHSQSPDINRGVDRKEEIADEFDRVGAGDQGMMFGYACTETPELMPAAIQYAQELVRLLAEIRKEGKIMTYLRPDAKSQVTLEYDGNDNVLRVEAVVVSTQHDPEPAGMSEAEFQAVIKNDVIENVIKKVIPAKLIDENTKFHINPTGRFEIGGPHGDTGLTGRKIIVDTYGGAAPHGGGAFSGKDPSKVDRSAAYAARHVAKNIVAAGLADKCTVQVSYAIGVARPISIYINTHGTSKHGLSDEQIQEKAEAIFDLRPLAIIRRFNLDRPHGWCYRDTAAYGHFGREQFPWEKTEKVAELKAALGL.

His-17 lines the ATP pocket. Residue Asp-19 coordinates Mg(2+). Glu-45 lines the K(+) pocket. L-methionine is bound by residues Glu-58 and Gln-101. The flexible loop stretch occupies residues 101–111 (QSPDINRGVDR). ATP is bound by residues 172 to 174 (DAK), 246 to 247 (RF), Asp-255, 261 to 262 (RK), Ala-278, and Lys-282. Asp-255 is an L-methionine binding site. Lys-286 contributes to the L-methionine binding site.

This sequence belongs to the AdoMet synthase family. As to quaternary structure, homotetramer; dimer of dimers. The cofactor is Mg(2+). It depends on K(+) as a cofactor.

Its subcellular location is the cytoplasm. The enzyme catalyses L-methionine + ATP + H2O = S-adenosyl-L-methionine + phosphate + diphosphate. It participates in amino-acid biosynthesis; S-adenosyl-L-methionine biosynthesis; S-adenosyl-L-methionine from L-methionine: step 1/1. Its function is as follows. Catalyzes the formation of S-adenosylmethionine (AdoMet) from methionine and ATP. The overall synthetic reaction is composed of two sequential steps, AdoMet formation and the subsequent tripolyphosphate hydrolysis which occurs prior to release of AdoMet from the enzyme. The sequence is that of S-adenosylmethionine synthase from Chlorobaculum tepidum (strain ATCC 49652 / DSM 12025 / NBRC 103806 / TLS) (Chlorobium tepidum).